A 56-amino-acid polypeptide reads, in one-letter code: MAYVINEACISCGACEPECPVNAISSGDDRYVIDADTCIDCGACAGVCPVDAPVQA.

4Fe-4S ferredoxin-type domains are found at residues 1-28 and 29-56; these read MAYVINEACISCGACEPECPVNAISSGD and DRYVIDADTCIDCGACAGVCPVDAPVQA. The [4Fe-4S] cluster site is built by Cys9, Cys12, Cys15, Cys19, Cys38, Cys41, Cys44, and Cys48.

[4Fe-4S] cluster serves as cofactor.

Functionally, ferredoxins are iron-sulfur proteins that transfer electrons in a wide variety of metabolic reactions. The protein is 4Fe-4S ferredoxin FdxA of Gottschalkia acidurici (strain ATCC 7906 / DSM 604 / BCRC 14475 / CIP 104303 / KCTC 5404 / NCIMB 10678 / 9a) (Clostridium acidurici).